A 319-amino-acid polypeptide reads, in one-letter code: Nuclear hormone receptor family member nhr-174 (319 aa).

Residues 7–81 (DPVCPVCEFP…AGMKRNLVRQ (75 aa)) constitute a DNA-binding region (nuclear receptor). NR C4-type zinc fingers lie at residues 10–31 (CPVCEFPSNVELHFGGLVCGAC) and 47–63 (CEKKNQCKGKRKNCRAC). In terms of domain architecture, NR LBD spans 130-319 (EAEKDVSKIL…SMKKSRYLQF (190 aa)).

It belongs to the nuclear hormone receptor family.

The protein localises to the nucleus. Orphan nuclear receptor. The protein is Nuclear hormone receptor family member nhr-174 (nhr-174) of Caenorhabditis elegans.